The chain runs to 417 residues: MAERFVVTGGNRLSGEVAVGGAKNSVLKLMAATLLAEGTSTITNCPDILDVPLMAEVLRGLGATVELDGDVARITSPDEPKYDADFAAVRQFRASVCVLGPLVGRCKRARVALPGGDAIGSRPLDMHQAGLRQLGATCNIEHGCVVAQADTLRGAEIQLEFPSVGATENILMAAVVAEGVTTIHNAAREPDVVDLCTMLNQMGAQVEGAGSPTMTITGVPRLYPTEHRVIGDRIVAATWGIAAAMTRGDISVTGVDPAHLQVVLHKLHDAGATVTQTDDSFRVTQYERPKAVNVATLPFPGFPTDLQPMAIALASIADGTSMITENVFEARFRFVEEMIRLGADARTDGHHAVVRGLPQLSSAPVWCSDIRAGAGLVLAGLVADGDTEVHDVFHIDRGYPLFVENLAILGAEIERVE.

23-24 (KN) lines the phosphoenolpyruvate pocket. R93 contacts UDP-N-acetyl-alpha-D-glucosamine. The Proton donor role is filled by D117. UDP-N-acetyl-alpha-D-glucosamine-binding residues include D305 and V327.

The protein belongs to the EPSP synthase family. MurA subfamily.

The protein resides in the cytoplasm. It carries out the reaction phosphoenolpyruvate + UDP-N-acetyl-alpha-D-glucosamine = UDP-N-acetyl-3-O-(1-carboxyvinyl)-alpha-D-glucosamine + phosphate. It functions in the pathway cell wall biogenesis; peptidoglycan biosynthesis. Functionally, cell wall formation. Adds enolpyruvyl to UDP-N-acetylglucosamine. This chain is UDP-N-acetylglucosamine 1-carboxyvinyltransferase, found in Mycolicibacterium paratuberculosis (strain ATCC BAA-968 / K-10) (Mycobacterium paratuberculosis).